The following is a 37-amino-acid chain: Large ribosomal subunit protein bL36 (37 aa).

The protein belongs to the bacterial ribosomal protein bL36 family.

The chain is Large ribosomal subunit protein bL36 from Francisella tularensis subsp. mediasiatica (strain FSC147).